Reading from the N-terminus, the 125-residue chain is MSIETLVEEIGKLTLTEASELVKALEEKFGVSAAPAIVAGIASAAPAGDAPAQEEKTEFDVVLTSAGESKINVIKVVRALTGLGLKEAKDLVDGAPKTVKEAVSKDEAEKIAKELKDVGAGVELK.

The protein belongs to the bacterial ribosomal protein bL12 family. In terms of assembly, homodimer. Part of the ribosomal stalk of the 50S ribosomal subunit. Forms a multimeric L10(L12)X complex, where L10 forms an elongated spine to which 2 to 4 L12 dimers bind in a sequential fashion. Binds GTP-bound translation factors.

In terms of biological role, forms part of the ribosomal stalk which helps the ribosome interact with GTP-bound translation factors. Is thus essential for accurate translation. The chain is Large ribosomal subunit protein bL12 from Chlorobium limicola (strain DSM 245 / NBRC 103803 / 6330).